Here is a 155-residue protein sequence, read N- to C-terminus: MAKGEGNVIAQNKKARHDYTIVDTVEAGMVLTGTEIKSIRAGRINLKDGFAQIKQGEAWLVNVHIAPYDEGNIWNQEPTRTRKLLLRKKQIESLDNEVKGTGMTLVPLKVYIKDGFAKVLIGLAKGKHDYDKRESIKRREQDRDIKRTMKAINSR.

This sequence belongs to the SmpB family.

The protein localises to the cytoplasm. Functionally, required for rescue of stalled ribosomes mediated by trans-translation. Binds to transfer-messenger RNA (tmRNA), required for stable association of tmRNA with ribosomes. tmRNA and SmpB together mimic tRNA shape, replacing the anticodon stem-loop with SmpB. tmRNA is encoded by the ssrA gene; the 2 termini fold to resemble tRNA(Ala) and it encodes a 'tag peptide', a short internal open reading frame. During trans-translation Ala-aminoacylated tmRNA acts like a tRNA, entering the A-site of stalled ribosomes, displacing the stalled mRNA. The ribosome then switches to translate the ORF on the tmRNA; the nascent peptide is terminated with the 'tag peptide' encoded by the tmRNA and targeted for degradation. The ribosome is freed to recommence translation, which seems to be the essential function of trans-translation. The polypeptide is SsrA-binding protein (Streptococcus suis (strain 98HAH33)).